The chain runs to 491 residues: uncharacterized protein (491 aa).

A substrate-binding site is contributed by tryptophan 99. Asparagine 137 contributes to the Ca(2+) binding site. Histidine 138 is a binding site for substrate. Ca(2+)-binding residues include glutamate 177 and aspartate 190. Arginine 219 contacts substrate. Ca(2+)-binding residues include aspartate 221, histidine 225, and glutamate 245. Aspartate 221 acts as the Nucleophile in catalysis. 224–225 (KH) is a binding site for substrate. Glutamate 245 acts as the Proton donor in catalysis. 3 residues coordinate substrate: glycine 249, histidine 312, and arginine 360.

The protein belongs to the glycosyl hydrolase 13 family. The cofactor is Ca(2+).

It localises to the cytoplasm. The protein resides in the nucleus. This is an uncharacterized protein from Schizosaccharomyces pombe (strain 972 / ATCC 24843) (Fission yeast).